The sequence spans 898 residues: Sodium/hydrogen exchanger 5 (898 aa).

Residues methionine 1–arginine 3 lie on the Cytoplasmic side of the membrane. A helical transmembrane segment spans residues valine 4 to threonine 24. Residues glutamine 25–glutamate 47 lie on the Extracellular side of the membrane. The helical transmembrane segment at alanine 48–leucine 68 threads the bilayer. Residues serine 69–leucine 75 are Cytoplasmic-facing. A helical membrane pass occupies residues valine 76–valine 96. Residues alanine 97–alanine 136 are Extracellular-facing. A helical membrane pass occupies residues isoleucine 137–tryptophan 157. Residues glycine 158–aspartate 175 lie on the Cytoplasmic side of the membrane. A helical transmembrane segment spans residues phenylalanine 176–glutamate 196. Residues glutamate 197 to glutamate 202 lie on the Extracellular side of the membrane. Asparagine 201 carries N-linked (GlcNAc...) asparagine glycosylation. A helical membrane pass occupies residues threonine 203 to tyrosine 223. Over lysine 224–serine 248 the chain is Cytoplasmic. A helical transmembrane segment spans residues leucine 249–leucine 269. Over threonine 270–arginine 278 the chain is Extracellular. A helical transmembrane segment spans residues isoleucine 279 to alanine 299. Over serine 300–threonine 333 the chain is Cytoplasmic. Residues methionine 334–valine 354 form a helical membrane-spanning segment. The Extracellular segment spans residues aspartate 355–aspartate 362. The helical transmembrane segment at serine 363–leucine 383 threads the bilayer. Over glutamine 384–aspartate 400 the chain is Cytoplasmic. Residues glutamine 401–leucine 421 form a helical membrane-spanning segment. At aspartate 422 to aspartate 430 the chain is on the extracellular side. The chain crosses the membrane as a helical span at residues tyrosine 431–isoleucine 451. Residues lysine 452–leucine 898 lie on the Cytoplasmic side of the membrane. Disordered regions lie at residues threonine 660–glycine 692 and glutamate 801–tryptophan 888. Basic residues predominate over residues serine 662–lysine 674. Residues glutamate 856–leucine 867 show a composition bias toward polar residues.

Belongs to the monovalent cation:proton antiporter 1 (CPA1) transporter (TC 2.A.36) family. As to quaternary structure, interacts with CHP1 and CHP2. Interacts with ARRB2; facilitates the endocytosis of SLC9A5 from the plasma membrane. Interacts with RACK1; this interaction positively regulates SLC9A5 activity and promotes SLC9A5 localization to focal adhesions. Interacts with SCAMP2; this interaction regulates SLC9A5 cell-surface targeting and SLC9A5 activity. Phosphorylated by PRKAA2; promotes its accumulation at the cell surface. Phosphorylated by CSNK2A1 in a manner favoring its beta-arrestin binding and endocytosis. As to expression, highly expressed in brain. Strongly expressed in the dentate gyrus.

It localises to the cell membrane. Its subcellular location is the recycling endosome membrane. The protein resides in the cell projection. It is found in the dendritic spine membrane. The protein localises to the synaptic cell membrane. It localises to the cell junction. Its subcellular location is the focal adhesion. The enzyme catalyses Na(+)(in) + H(+)(out) = Na(+)(out) + H(+)(in). Plasma membrane Na(+)/H(+) antiporter. Mediates the electroneutral exchange of intracellular H(+) ions for extracellular Na(+) in 1:1 stoichiometry. Responsible for regulating intracellular pH homeostasis, in particular in neural tissues. Acts as a negative regulator of dendritic spine growth. Plays a role in postsynaptic remodeling and signaling. Can also contribute to organellar pH regulation, with consequences for receptor tyrosine kinase trafficking. The chain is Sodium/hydrogen exchanger 5 (Slc9a5) from Rattus norvegicus (Rat).